We begin with the raw amino-acid sequence, 256 residues long: Peroxisomal membrane protein PMP30A (256 aa).

Belongs to the peroxin-11 family.

The protein resides in the peroxisome membrane. In terms of biological role, involved in peroxisomal proliferation. Could participate in peroxisomal elongation or fission. May be involved in parceling of peroxisomes into regular quanta. This chain is Peroxisomal membrane protein PMP30A (PEX11A), found in Candida boidinii (Yeast).